Here is a 324-residue protein sequence, read N- to C-terminus: Anthranilate phosphoribosyltransferase (324 aa).

Residues G72, 75 to 76 (GD), T80, 82 to 85 (NVST), 99 to 107 (KHGNVSVTS), and S111 each bind 5-phospho-alpha-D-ribose 1-diphosphate. G72 provides a ligand contact to anthranilate. S84 contributes to the Mg(2+) binding site. N102 serves as a coordination point for anthranilate. R157 provides a ligand contact to anthranilate. The Mg(2+) site is built by D215 and E216.

This sequence belongs to the anthranilate phosphoribosyltransferase family. In terms of assembly, homodimer. Requires Mg(2+) as cofactor.

The enzyme catalyses N-(5-phospho-beta-D-ribosyl)anthranilate + diphosphate = 5-phospho-alpha-D-ribose 1-diphosphate + anthranilate. The protein operates within amino-acid biosynthesis; L-tryptophan biosynthesis; L-tryptophan from chorismate: step 2/5. Its function is as follows. Catalyzes the transfer of the phosphoribosyl group of 5-phosphorylribose-1-pyrophosphate (PRPP) to anthranilate to yield N-(5'-phosphoribosyl)-anthranilate (PRA). This Pyrococcus furiosus (strain ATCC 43587 / DSM 3638 / JCM 8422 / Vc1) protein is Anthranilate phosphoribosyltransferase.